The following is a 162-amino-acid chain: Tegument protein BLRF2 (162 aa).

Residues 12–43 (VKAVDMSMEDMAARLARLESENKALKQQVLRG) are a coiled coil. The segment at 121–162 (GAKGQPSPGEGTRLRESNDPNATRRARSRSRGREAKKVQISD) is disordered. Residues 151 to 162 (RGREAKKVQISD) show a composition bias toward basic and acidic residues.

This sequence belongs to the herpesviridae BLRF2 family. Homooligomer; homooligomerizes and binds double-stranded DNA (dsDNA) cooperatively. Interacts with host CGAS.

It localises to the virion tegument. Its subcellular location is the host cytoplasm. Its function is as follows. Plays a role in the inhibition of host innate immune system by targeting the CGAS enzymatic activity which is the principal cytosolic DNA sensor that detects invading viral DNA. Acts by inhibiting CGAS-DNA phase separation: directly binds double-stranded DNA (dsDNA) in a length dependent but sequence independent manner and is able to form DNA-induced phase separation in infected cells. DNA phase separation of ORF52 mediates disruption of liquid-like droplets in which CGAS is activated, thereby preventing CGAS activity. In Epstein-Barr virus (strain GD1) (HHV-4), this protein is Tegument protein BLRF2.